We begin with the raw amino-acid sequence, 562 residues long: Phosphoacetylglucosamine mutase (562 aa).

S74 serves as the catalytic Phosphoserine intermediate. Residues S74, D291, D293, and D295 each contribute to the Mg(2+) site. Substrate-binding positions include 395–397, 526–530, and R535; these read EAN and RPSGT.

This sequence belongs to the phosphohexose mutase family. Mg(2+) is required as a cofactor.

It catalyses the reaction N-acetyl-alpha-D-glucosamine 1-phosphate = N-acetyl-D-glucosamine 6-phosphate. Its pathway is nucleotide-sugar biosynthesis; UDP-N-acetyl-alpha-D-glucosamine biosynthesis; N-acetyl-alpha-D-glucosamine 1-phosphate from alpha-D-glucosamine 6-phosphate (route I): step 2/2. Its function is as follows. Interconverts GlcNAc-6-P and GlcNAc-1-P. The protein is Phosphoacetylglucosamine mutase of Oryza sativa subsp. japonica (Rice).